A 172-amino-acid chain; its full sequence is RNA silencing suppressor p19 (172 aa).

2 stretches are compositionally biased toward basic and acidic residues: residues 1 to 14 and 150 to 172; these read MERAIQGSDVREQA and SEREGNVSRRRPEGTEAFKEESE. Disordered regions lie at residues 1–34 and 145–172; these read MERAIQGSDVREQADSECWDGGGGGTTSPFKLPD and LQPTPSEREGNVSRRRPEGTEAFKEESE.

The protein belongs to the tombusvirus protein p19 family. Homodimer.

Viral suppressor of RNA silencing which binds specifically to silencing RNAs (siRNAs). Acts as a molecular caliper to specifically select siRNAs based on the length of the duplex region of the RNA. In Cymbidium ringspot virus (CymRSV), this protein is RNA silencing suppressor p19.